Consider the following 334-residue polypeptide: MKKNQFLKESDVTAESVFFMKRRQVLKALGISATALSLPHAAHADLLSWFKGNDRPPAPAGKALEFSKPAAWQNNLPLTPADKVSGYNNFYEFGLDKADPAANAGSLKTDPWTLKISGEVAKPLTLDHDDLTRRFPLEERIYRMRCVEAWSMVVPWIGFPLHKLLALAEPTSNAKYVAFETIYAPEQMPGQQDRFIGGGLKYPYVEGLRLDEAMHPLTLMTVGVYGKALPPQNGAPVRLIVPWKYGFKGIKSIVSIKLTRERPPTTWNLAAPDEYGFYANVNPYVDHPRWSQATERFIGSGGILDVQRQPTLLFNGYAAQVASLYRGLDLRENF.

The segment at residues 1–44 (MKKNQFLKESDVTAESVFFMKRRQVLKALGISATALSLPHAAHA) is a signal peptide (tat-type signal). Mo-molybdopterin is bound by residues N88, 91-92 (YE), C146, T181, N233, R238, and 249-251 (GIK).

The protein belongs to the MsrP family. In terms of assembly, heterodimer of a catalytic subunit (MsrP) and a heme-binding subunit (MsrQ). Mo-molybdopterin is required as a cofactor. Post-translationally, exported by the Tat system. Can also be exported by the Sec system.

Its subcellular location is the periplasm. It carries out the reaction L-methionyl-[protein] + a quinone + H2O = L-methionyl-(S)-S-oxide-[protein] + a quinol. It catalyses the reaction L-methionyl-[protein] + a quinone + H2O = L-methionyl-(R)-S-oxide-[protein] + a quinol. In terms of biological role, part of the MsrPQ system that repairs oxidized periplasmic proteins containing methionine sulfoxide residues (Met-O), using respiratory chain electrons. Thus protects these proteins from oxidative-stress damage caused by reactive species of oxygen and chlorine. MsrPQ is essential for the maintenance of envelope integrity under bleach stress, rescuing a wide series of structurally unrelated periplasmic proteins from methionine oxidation, including the primary periplasmic chaperone SurA and the lipoprotein Pal. The catalytic subunit MsrP is non-stereospecific, being able to reduce both (R-) and (S-) diastereoisomers of methionine sulfoxide. Can catalyze the reduction of a variety of substrates in vitro, including dimethyl sulfoxide, trimethylamine N-oxide, phenylmethyl sulfoxide and L-methionine sulfoxide. Cannot reduce cyclic N-oxides. Shows no activity as sulfite oxidase. The chain is Protein-methionine-sulfoxide reductase catalytic subunit MsrP from Escherichia coli (strain K12).